The sequence spans 509 residues: Dihydrolipoyl dehydrogenase, mitochondrial (509 aa).

The transit peptide at 1–35 directs the protein to the mitochondrion; that stretch reads MQSWSRVYCSLAKRGHFNRISHGLQGVSSVPLRTY. N6-acetyllysine; alternate is present on K66. K66 is modified (N6-succinyllysine; alternate). FAD contacts are provided by residues 71 to 80 and K89; that span reads EKNDTLGGTC. C80 and C85 are disulfide-bonded. 3 positions are modified to N6-acetyllysine; alternate: K122, K132, and K143. 3 positions are modified to N6-succinyllysine; alternate: K122, K132, and K143. An FAD-binding site is contributed by G154. N6-succinyllysine occurs at positions 159 and 166. 183-185 contributes to the FAD binding site; that stretch reads TGS. Residues 220 to 227 and E243 each bind NAD(+); that span reads GAGVIGVE. N6-succinyllysine occurs at positions 273 and 277. V278 contacts NAD(+). Residues S285 and S297 each carry the phosphoserine modification. Position 314 (G314) interacts with NAD(+). The residue at position 346 (K346) is an N6-acetyllysine. FAD contacts are provided by residues D355 and 361-364; that span reads MLAH. K410 is modified (N6-acetyllysine; alternate). Residue K410 is modified to N6-succinyllysine; alternate. An N6-acetyllysine mark is found at K417 and K420. The residue at position 430 (K430) is an N6-succinyllysine. H487 acts as the Proton acceptor in catalysis. Position 502 is a phosphoserine (S502). K505 is subject to N6-acetyllysine; alternate. Residue K505 is modified to N6-succinyllysine; alternate.

It belongs to the class-I pyridine nucleotide-disulfide oxidoreductase family. In terms of assembly, homodimer. Part of the multimeric pyruvate dehydrogenase complex that contains multiple copies of pyruvate dehydrogenase (subunits PDHA (PDHA1 or PDHA2) and PDHB, E1), dihydrolipoamide acetyltransferase (DLAT, E2) and lipoamide dehydrogenase (DLD, E3). These subunits are bound to an inner core composed of about 48 DLAT and 12 PDHX molecules (by non covalent bonds). The 2-oxoglutarate dehydrogenase complex is composed of OGDH (2-oxoglutarate dehydrogenase; E1), DLST (dihydrolipoamide succinyltransferase; E2), DLD (dihydrolipoamide dehydrogenase; E3) and the assembly factor KGD4. It contains multiple copies of the three enzymatic components (E1, E2 and E3). In the nucleus, the 2-oxoglutarate dehydrogenase complex associates with KAT2A. Interacts with PDHX. It depends on FAD as a cofactor. Post-translationally, tyrosine phosphorylated.

Its subcellular location is the mitochondrion matrix. The protein resides in the nucleus. It localises to the cell projection. The protein localises to the cilium. It is found in the flagellum. Its subcellular location is the cytoplasmic vesicle. The protein resides in the secretory vesicle. It localises to the acrosome. It catalyses the reaction N(6)-[(R)-dihydrolipoyl]-L-lysyl-[protein] + NAD(+) = N(6)-[(R)-lipoyl]-L-lysyl-[protein] + NADH + H(+). Functionally, lipoamide dehydrogenase is a component of the glycine cleavage system as well as an E3 component of three alpha-ketoacid dehydrogenase complexes (pyruvate-, alpha-ketoglutarate-, and branched-chain amino acid-dehydrogenase complex). The 2-oxoglutarate dehydrogenase complex is mainly active in the mitochondrion. A fraction of the 2-oxoglutarate dehydrogenase complex also localizes in the nucleus and is required for lysine succinylation of histones: associates with KAT2A on chromatin and provides succinyl-CoA to histone succinyltransferase KAT2A. In monomeric form may have additional moonlighting function as serine protease. Involved in the hyperactivation of spermatazoa during capacitation and in the spermatazoal acrosome reaction. In Cricetulus griseus (Chinese hamster), this protein is Dihydrolipoyl dehydrogenase, mitochondrial (DLD).